A 205-amino-acid chain; its full sequence is Putative glutamine amidotransferase-like protein L716 (205 aa).

The region spanning 1 to 176 (MLLIIQNGYI…SNHIESYDYA (176 aa)) is the Glutamine amidotransferase type-1 domain. Residues C82, H155, and D157 each act as for GATase activity in the active site.

The polypeptide is Putative glutamine amidotransferase-like protein L716 (Acanthamoeba polyphaga mimivirus (APMV)).